The chain runs to 496 residues: Lysine--tRNA ligase (496 aa).

Mg(2+)-binding residues include Glu-403 and Glu-410.

This sequence belongs to the class-II aminoacyl-tRNA synthetase family. In terms of assembly, homodimer. It depends on Mg(2+) as a cofactor.

Its subcellular location is the cytoplasm. The enzyme catalyses tRNA(Lys) + L-lysine + ATP = L-lysyl-tRNA(Lys) + AMP + diphosphate. The sequence is that of Lysine--tRNA ligase from Aster yellows witches'-broom phytoplasma (strain AYWB).